The chain runs to 295 residues: MFPNSKVELPKSTPVRRIGLSVQYEGSNFCGWQRQPQAVSVQQVLEEAISQLDPQRPIQAVAAGRTDAGVHAAGQVVHFDCCGPIPAERWAPALNGRLPNTIRVREAVARPASWHACHSATYRRYRYTIYNGRRPNLFLTPWSWHRYHVRLDETVMQVALEGLLGLQDLSAFQRTGSRRAHARTTVQDVKIERQGDLIMIEIQASGFLYGMVRLLMGQLVALGEHRLNLQTFERRWKEKRRQEVKEAAPAQGLCLLRAGYEEDIFSKGGWYDCQPRYSLGANDPPLDPPSAPESS.

Aspartate 67 serves as the catalytic Nucleophile. Tyrosine 125 provides a ligand contact to substrate.

The protein belongs to the tRNA pseudouridine synthase TruA family. As to quaternary structure, homodimer.

The enzyme catalyses uridine(38/39/40) in tRNA = pseudouridine(38/39/40) in tRNA. Formation of pseudouridine at positions 38, 39 and 40 in the anticodon stem and loop of transfer RNAs. In Prochlorococcus marinus (strain MIT 9303), this protein is tRNA pseudouridine synthase A.